A 984-amino-acid chain; its full sequence is Mineralocorticoid receptor (984 aa).

Positions 1 to 602 (METKGYHSLP…STGSSRPSKI (602 aa)) are modulating. The span at 231–243 (QGTPLTCSPNVEN) shows a compositional bias: polar residues. Disordered stretches follow at residues 231–329 (QGTP…AAST) and 347–373 (GTSA…QEVP). Phosphoserine occurs at positions 250, 259, 283, 287, and 299. Over residues 259–291 (SPLSSPLSSMKSSISSPPSHCSVKSPVSSPNNV) the composition is skewed to low complexity. Residues 292–329 (TLRSSVSSPANINNSRCSVSSPSNTNNRSTLSSPAAST) are compositionally biased toward polar residues. Residues cysteine 603, cysteine 606, cysteine 620, cysteine 623, cysteine 639, cysteine 645, cysteine 655, and cysteine 658 each coordinate Zn(2+). 2 NR C4-type zinc fingers span residues 603–623 (CLVC…CGSC) and 639–663 (CAGR…LQKC). Positions 603–668 (CLVCGDEASG…RLQKCLQAGM (66 aa)) form a DNA-binding region, nuclear receptor. A hinge region spans residues 669–725 (NLGARKSKKLGKLKGIHEEQPQQQQPPPPPPPPQSPEEGTTYIAPAKEPSVNTALVP). The disordered stretch occupies residues 684–710 (IHEEQPQQQQPPPPPPPPQSPEEGTTY). Positions 692-703 (QQPPPPPPPPQS) are enriched in pro residues. The 239-residue stretch at 726–964 (QLSTISRALT…EFPAMLVEII (239 aa)) folds into the NR LBD domain. 21-hydroxyprogesterone contacts are provided by asparagine 770 and glutamine 776. 2 residues coordinate aldosterone: asparagine 770 and glutamine 776. Progesterone is bound by residues asparagine 770 and glutamine 776. The important for coactivator binding stretch occupies residues 782–785 (KWAK). 21-hydroxyprogesterone contacts are provided by arginine 817 and threonine 945. Residues arginine 817 and threonine 945 each coordinate aldosterone. Residues arginine 817 and threonine 945 each coordinate progesterone.

The protein belongs to the nuclear hormone receptor family. NR3 subfamily. As to quaternary structure, heteromultimeric cytoplasmic complex with HSP90, HSP70, and FKBP4, in the absence of ligand. After ligand binding, it translocates to the nucleus and binds to DNA as a homodimer and as a heterodimer with NR3C1. May interact with HSD11B2 in the absence of ligand. Binds the coactivators NCOA1, NCOA2, TIF1 and NRIP1. In terms of processing, phosphorylated. As to expression, ubiquitous. Highly expressed in distal tubules, convoluted tubules and cortical collecting duct in kidney, and in sweat glands. Detected at lower levels in cardiomyocytes, in epidermis and in colon enterocytes.

It localises to the cytoplasm. It is found in the nucleus. The protein resides in the endoplasmic reticulum membrane. Functionally, receptor for both mineralocorticoids (MC) such as aldosterone and glucocorticoids (GC) such as corticosterone or cortisol. Binds to mineralocorticoid response elements (MRE) and transactivates target genes. The effect of MC is to increase ion and water transport and thus raise extracellular fluid volume and blood pressure and lower potassium levels. The chain is Mineralocorticoid receptor (NR3C2) from Homo sapiens (Human).